A 253-amino-acid chain; its full sequence is Large ribosomal subunit protein mL57 (253 aa).

The transit peptide at 1–28 (MENSMMFISRSLRRPVTALNCNLQSVRT) directs the protein to the mitochondrion.

This sequence belongs to the ribonuclease III family. Mitochondrion-specific ribosomal protein mL57 subfamily. In terms of assembly, component of the mitochondrial large ribosomal subunit (mt-LSU). Mature yeast 74S mitochondrial ribosomes consist of a small (37S) and a large (54S) subunit. The 37S small subunit contains a 15S ribosomal RNA (15S mt-rRNA) and 34 different proteins. The 54S large subunit contains a 21S rRNA (21S mt-rRNA) and 46 different proteins. mL57 forms a heterodimer with mL44 and stabilizes rRNA expansion segments 1/2 at a membrane-facing protuberance close to the point of attachment of the ribosome to the translocon in the membrane.

It localises to the mitochondrion. Functionally, component of the mitochondrial ribosome (mitoribosome), a dedicated translation machinery responsible for the synthesis of mitochondrial genome-encoded proteins, including at least some of the essential transmembrane subunits of the mitochondrial respiratory chain. The mitoribosomes are attached to the mitochondrial inner membrane and translation products are cotranslationally integrated into the membrane. The chain is Large ribosomal subunit protein mL57 (MRPL15) from Saccharomyces cerevisiae (strain ATCC 204508 / S288c) (Baker's yeast).